The chain runs to 830 residues: Prolactin receptor (830 aa).

The first 23 residues, 1–23 (MKQKLRSSVQIILLFALTAVGLT), serve as a signal peptide directing secretion. Residues 24 to 439 (GQSYPGKPKI…QIPTDFRIKD (416 aa)) are Extracellular-facing. 4 Fibronectin type-III domains span residues 30–128 (KPKI…VQPD), 129–228 (APVN…IPNG), 231–331 (PPEK…IVQT), and 333–434 (PPVN…IPTD). A disulfide bridge connects residues Cys36 and Cys46. Asn59 is a glycosylation site (N-linked (GlcNAc...) asparagine). Cys75 and Cys86 are oxidised to a cystine. N-linked (GlcNAc...) asparagine glycosylation is found at Asn91, Asn100, Asn112, Asn132, Asn263, Asn304, Asn316, and Asn336. The Zn(2+) site is built by Asp415 and His417. The WSXWS motif motif lies at 420-424 (WSEWS). Residues 440 to 460 (MVVWIIVGVLSSLICLVMSWT) traverse the membrane as a helical segment. Topologically, residues 461-830 (MVLKGYRMIA…DPSSFIPAFK (370 aa)) are cytoplasmic. Residues 472–480 (ILPPVPGPK) carry the Box 1 motif motif.

It belongs to the type I cytokine receptor family. Type 1 subfamily.

The protein localises to the membrane. In terms of biological role, this is a receptor for the anterior pituitary hormone prolactin. In Columba livia (Rock dove), this protein is Prolactin receptor (PRLR).